We begin with the raw amino-acid sequence, 911 residues long: Protein translocase subunit SecA (911 aa).

ATP is bound by residues glutamine 87, 105–109 (GEGKT), and aspartate 512. Positions 861-880 (APGLGSEQLSEEGAEVAVAS) are disordered. Zn(2+)-binding residues include cysteine 895, cysteine 897, cysteine 906, and histidine 907.

This sequence belongs to the SecA family. In terms of assembly, monomer and homodimer. Part of the essential Sec protein translocation apparatus which comprises SecA, SecYEG and auxiliary proteins SecDF-YajC and YidC. The cofactor is Zn(2+).

It is found in the cell inner membrane. The protein resides in the cytoplasm. The catalysed reaction is ATP + H2O + cellular proteinSide 1 = ADP + phosphate + cellular proteinSide 2.. In terms of biological role, part of the Sec protein translocase complex. Interacts with the SecYEG preprotein conducting channel. Has a central role in coupling the hydrolysis of ATP to the transfer of proteins into and across the cell membrane, serving both as a receptor for the preprotein-SecB complex and as an ATP-driven molecular motor driving the stepwise translocation of polypeptide chains across the membrane. The polypeptide is Protein translocase subunit SecA (Pseudomonas putida (strain ATCC 47054 / DSM 6125 / CFBP 8728 / NCIMB 11950 / KT2440)).